We begin with the raw amino-acid sequence, 505 residues long: Glutamyl-tRNA(Gln) amidotransferase subunit B, mitochondrial (505 aa).

Belongs to the GatB/GatE family. GatB subfamily. As to quaternary structure, subunit of the heterotrimeric GatCAB amidotransferase (AdT) complex, composed of A, B and C subunits.

Its subcellular location is the mitochondrion. It catalyses the reaction L-glutamyl-tRNA(Gln) + L-glutamine + ATP + H2O = L-glutaminyl-tRNA(Gln) + L-glutamate + ADP + phosphate + H(+). Its function is as follows. Allows the formation of correctly charged Gln-tRNA(Gln) through the transamidation of misacylated Glu-tRNA(Gln) in the mitochondria. The reaction takes place in the presence of glutamine and ATP through an activated gamma-phospho-Glu-tRNA(Gln). This is Glutamyl-tRNA(Gln) amidotransferase subunit B, mitochondrial from Schizosaccharomyces japonicus (strain yFS275 / FY16936) (Fission yeast).